A 351-amino-acid polypeptide reads, in one-letter code: Ribosomal RNA small subunit methyltransferase H (351 aa).

Residues 48–50 (GGY), D67, F94, D115, and Q122 contribute to the S-adenosyl-L-methionine site. The disordered stretch occupies residues 298-351 (GPVLPSEAETEVNPRARSAKLRAGERTDGPAPPPLSAIETLASLPAPQGRGTRR).

The protein belongs to the methyltransferase superfamily. RsmH family.

Its subcellular location is the cytoplasm. The enzyme catalyses cytidine(1402) in 16S rRNA + S-adenosyl-L-methionine = N(4)-methylcytidine(1402) in 16S rRNA + S-adenosyl-L-homocysteine + H(+). Specifically methylates the N4 position of cytidine in position 1402 (C1402) of 16S rRNA. The protein is Ribosomal RNA small subunit methyltransferase H of Methylorubrum populi (strain ATCC BAA-705 / NCIMB 13946 / BJ001) (Methylobacterium populi).